Here is a 652-residue protein sequence, read N- to C-terminus: Acetyl-coenzyme A synthetase (652 aa).

CoA contacts are provided by residues 191–194, Thr-311, and Asn-335; that span reads RAGR. Residues 387-389, 411-416, Asp-500, and Arg-515 contribute to the ATP site; these read GEP and DTWWQT. Residue Ser-523 coordinates CoA. An ATP-binding site is contributed by Arg-526. Val-537, His-539, and Ile-542 together coordinate Mg(2+). Arg-584 is a binding site for CoA. Position 609 is an N6-acetyllysine; by Pat (Lys-609).

The protein belongs to the ATP-dependent AMP-binding enzyme family. Monomer. Mg(2+) serves as cofactor. Acetylated. Deacetylation by the SIR2-homolog deacetylase activates the enzyme.

It catalyses the reaction acetate + ATP + CoA = acetyl-CoA + AMP + diphosphate. Functionally, catalyzes the conversion of acetate into acetyl-CoA (AcCoA), an essential intermediate at the junction of anabolic and catabolic pathways. Acs undergoes a two-step reaction. In the first half reaction, Acs combines acetate with ATP to form acetyl-adenylate (AcAMP) intermediate. In the second half reaction, it can then transfer the acetyl group from AcAMP to the sulfhydryl group of CoA, forming the product AcCoA. Required for acetate recapture but not for acetate excretion when this organism is grown on ethanolamine. In terms of biological role, enables the cell to use acetate during aerobic growth to generate energy via the TCA cycle, and biosynthetic compounds via the glyoxylate shunt. Acetylates CheY, the response regulator involved in flagellar movement and chemotaxis. In Salmonella typhimurium (strain LT2 / SGSC1412 / ATCC 700720), this protein is Acetyl-coenzyme A synthetase.